A 98-amino-acid chain; its full sequence is Plastocyanin (98 aa).

Positions 1-98 (AQIVKLGGDD…AGMKMTITVQ (98 aa)) constitute a Plastocyanin-like domain. Cu(2+) is bound by residues His-38, Cys-83, His-86, and Met-91.

This sequence belongs to the plastocyanin family. Cu(2+) is required as a cofactor.

The protein localises to the plastid. Its subcellular location is the chloroplast thylakoid membrane. Participates in electron transfer between P700 and the cytochrome b6-f complex in photosystem I. Has antiviral activity against Potato virus Y (strain N). The chain is Plastocyanin (PETE) from Ulva pertusa (Sea lettuce).